A 499-amino-acid polypeptide reads, in one-letter code: Proline dehydrogenase 1, mitochondrial (499 aa).

A mitochondrion-targeting transit peptide spans M1–F72.

Belongs to the proline oxidase family. It depends on FAD as a cofactor. In terms of tissue distribution, ubiquitous. Highest expression in pollen grains, in the stigma and in developing embryos.

It localises to the mitochondrion. The enzyme catalyses L-proline + a quinone = (S)-1-pyrroline-5-carboxylate + a quinol + H(+). Its pathway is amino-acid degradation; L-proline degradation into L-glutamate; L-glutamate from L-proline: step 1/2. In terms of biological role, converts proline to delta-1-pyrroline-5-carboxylate. The protein is Proline dehydrogenase 1, mitochondrial (POX1) of Arabidopsis thaliana (Mouse-ear cress).